A 949-amino-acid polypeptide reads, in one-letter code: Glycine dehydrogenase (decarboxylating) (949 aa).

Lys702 carries the N6-(pyridoxal phosphate)lysine modification.

The protein belongs to the GcvP family. In terms of assembly, the glycine cleavage system is composed of four proteins: P, T, L and H. Pyridoxal 5'-phosphate serves as cofactor.

It catalyses the reaction N(6)-[(R)-lipoyl]-L-lysyl-[glycine-cleavage complex H protein] + glycine + H(+) = N(6)-[(R)-S(8)-aminomethyldihydrolipoyl]-L-lysyl-[glycine-cleavage complex H protein] + CO2. The glycine cleavage system catalyzes the degradation of glycine. The P protein binds the alpha-amino group of glycine through its pyridoxal phosphate cofactor; CO(2) is released and the remaining methylamine moiety is then transferred to the lipoamide cofactor of the H protein. This Rhodococcoides fascians (Rhodococcus fascians) protein is Glycine dehydrogenase (decarboxylating).